Reading from the N-terminus, the 255-residue chain is F-box only protein 44 (255 aa).

The F-box domain occupies 3 to 50; the sequence is VGNINELPENILLELFIHIPARQLLLRCRPVCSLWRDLIDLVTLWKRK. Residues 71-252 form the FBA domain; that stretch reads FYFLRSLQRN…VTNSSITIGP (182 aa).

In terms of assembly, part of a SCF (SKP1-cullin-F-box) protein ligase complex. Interacts with SKP1 and CUL1. As to expression, expressed in brain, liver, pancreas and adipose tissue (at protein level). Widely expressed.

Functionally, substrate-recognition component of the SCF (SKP1-CUL1-F-box protein)-type E3 ubiquitin ligase complex. The sequence is that of F-box only protein 44 (Fbxo44) from Mus musculus (Mouse).